Reading from the N-terminus, the 348-residue chain is Selenide, water dikinase (348 aa).

C17 is a catalytic residue. Residues K20 and 47-49 contribute to the ATP site; that span reads THD. Residue D50 participates in Mg(2+) binding. Residues D67, D90, and 138 to 140 contribute to the ATP site; that span reads GHT. A Mg(2+)-binding site is contributed by D90. D226 contacts Mg(2+).

It belongs to the selenophosphate synthase 1 family. Class I subfamily. In terms of assembly, homodimer. Mg(2+) is required as a cofactor.

It carries out the reaction hydrogenselenide + ATP + H2O = selenophosphate + AMP + phosphate + 2 H(+). In terms of biological role, synthesizes selenophosphate from selenide and ATP. This is Selenide, water dikinase from Porphyromonas gingivalis (strain ATCC 33277 / DSM 20709 / CIP 103683 / JCM 12257 / NCTC 11834 / 2561).